The primary structure comprises 263 residues: 3-methyl-2-oxobutanoate hydroxymethyltransferase (263 aa).

Asp-43 and Asp-82 together coordinate Mg(2+). Residues 43–44 (DS), Asp-82, and Lys-111 each bind 3-methyl-2-oxobutanoate. Residue Glu-113 participates in Mg(2+) binding. Glu-179 serves as the catalytic Proton acceptor.

The protein belongs to the PanB family. As to quaternary structure, homodecamer; pentamer of dimers. Requires Mg(2+) as cofactor.

It is found in the cytoplasm. It catalyses the reaction 3-methyl-2-oxobutanoate + (6R)-5,10-methylene-5,6,7,8-tetrahydrofolate + H2O = 2-dehydropantoate + (6S)-5,6,7,8-tetrahydrofolate. It participates in cofactor biosynthesis; (R)-pantothenate biosynthesis; (R)-pantoate from 3-methyl-2-oxobutanoate: step 1/2. In terms of biological role, catalyzes the reversible reaction in which hydroxymethyl group from 5,10-methylenetetrahydrofolate is transferred onto alpha-ketoisovalerate to form ketopantoate. The sequence is that of 3-methyl-2-oxobutanoate hydroxymethyltransferase from Neisseria meningitidis serogroup A / serotype 4A (strain DSM 15465 / Z2491).